The following is a 179-amino-acid chain: ATP synthase subunit delta (179 aa).

It belongs to the ATPase delta chain family. F-type ATPases have 2 components, F(1) - the catalytic core - and F(0) - the membrane proton channel. F(1) has five subunits: alpha(3), beta(3), gamma(1), delta(1), epsilon(1). F(0) has three main subunits: a(1), b(2) and c(10-14). The alpha and beta chains form an alternating ring which encloses part of the gamma chain. F(1) is attached to F(0) by a central stalk formed by the gamma and epsilon chains, while a peripheral stalk is formed by the delta and b chains.

The protein resides in the cell membrane. F(1)F(0) ATP synthase produces ATP from ADP in the presence of a proton or sodium gradient. F-type ATPases consist of two structural domains, F(1) containing the extramembraneous catalytic core and F(0) containing the membrane proton channel, linked together by a central stalk and a peripheral stalk. During catalysis, ATP synthesis in the catalytic domain of F(1) is coupled via a rotary mechanism of the central stalk subunits to proton translocation. Its function is as follows. This protein is part of the stalk that links CF(0) to CF(1). It either transmits conformational changes from CF(0) to CF(1) or is implicated in proton conduction. The protein is ATP synthase subunit delta of Clostridium botulinum (strain ATCC 19397 / Type A).